Reading from the N-terminus, the 133-residue chain is CDGSH iron-sulfur domain-containing protein 2 homolog (133 aa).

At 1 to 35 (MQSVSQVVKTSLPNYLSSLPVPDTFGGWFKLSFKD) the chain is on the lumenal side. Residues 36–58 (WLALIPPTAVVVGIGYVTYRAFY) form a helical membrane-spanning segment. At 59–133 (PKAHRTCKSG…NVGPIVIKKK (75 aa)) the chain is on the cytoplasmic side. [2Fe-2S] cluster contacts are provided by C99, C101, C110, and H114.

It belongs to the CISD protein family. CISD2 subfamily. [2Fe-2S] cluster serves as cofactor.

Its subcellular location is the endoplasmic reticulum membrane. This Drosophila virilis (Fruit fly) protein is CDGSH iron-sulfur domain-containing protein 2 homolog.